A 570-amino-acid chain; its full sequence is Formate--tetrahydrofolate ligase (570 aa).

65 to 72 (TPYGEGKT) is an ATP binding site.

The protein belongs to the formate--tetrahydrofolate ligase family.

It carries out the reaction (6S)-5,6,7,8-tetrahydrofolate + formate + ATP = (6R)-10-formyltetrahydrofolate + ADP + phosphate. It participates in one-carbon metabolism; tetrahydrofolate interconversion. The sequence is that of Formate--tetrahydrofolate ligase from Shewanella piezotolerans (strain WP3 / JCM 13877).